A 553-amino-acid polypeptide reads, in one-letter code: Formate--tetrahydrofolate ligase (553 aa).

62-69 is an ATP binding site; the sequence is TPAGEGKS.

Belongs to the formate--tetrahydrofolate ligase family.

The enzyme catalyses (6S)-5,6,7,8-tetrahydrofolate + formate + ATP = (6R)-10-formyltetrahydrofolate + ADP + phosphate. It functions in the pathway one-carbon metabolism; tetrahydrofolate interconversion. The protein is Formate--tetrahydrofolate ligase of Pediococcus pentosaceus (strain ATCC 25745 / CCUG 21536 / LMG 10740 / 183-1w).